The sequence spans 381 residues: Deoxyguanosinetriphosphate triphosphohydrolase-like protein (381 aa).

The 128-residue stretch at 76–203 (RMTHTLEVAG…ADLSDEIAYT (128 aa)) folds into the HD domain.

This sequence belongs to the dGTPase family. Type 2 subfamily.

The chain is Deoxyguanosinetriphosphate triphosphohydrolase-like protein from Leptospira borgpetersenii serovar Hardjo-bovis (strain JB197).